Here is a 296-residue protein sequence, read N- to C-terminus: uncharacterized protein (296 aa).

Residues 1–20 form the signal peptide; that stretch reads MKKLLLIIITVFFAFNVAQA.

This is an uncharacterized protein from Rickettsia felis (strain ATCC VR-1525 / URRWXCal2) (Rickettsia azadi).